Reading from the N-terminus, the 397-residue chain is Purine ribonucleoside efflux pump NepI (397 aa).

Residues 1-21 (MNENIAEKFRADGVARPNWSA) are Cytoplasmic-facing. The chain crosses the membrane as a helical span at residues 22–42 (VFAVAFCVACLITVEFLPVSL). Over 43 to 54 (LTPMAQDLGISE) the chain is Periplasmic. The helical transmembrane segment at 55–75 (GVAGQSVTVTAFVAMFSSLFI) threads the bilayer. Over 76 to 85 (TQIIQATDRR) the chain is Cytoplasmic. Residues 86 to 106 (YIVILFAVLLTASCLMVSFAN) form a helical membrane-spanning segment. A topological domain (periplasmic) is located at residue serine 107. Residues 108–128 (FTLLLLGRACLGLALGGFWAI) traverse the membrane as a helical segment. Over 129–147 (SASLTMRLVPARTVPKALS) the chain is Cytoplasmic. A helical membrane pass occupies residues 148 to 168 (VIFGAVSIALVIAAPLGSFLG). Residues 169 to 175 (GIIGWRN) are Periplasmic-facing. A helical membrane pass occupies residues 176 to 196 (VFNAAAVMGVLCVIWVVKSLP). Topologically, residues 197 to 215 (SLPGEPSHQKQNMFSLLQR) are cytoplasmic. Residues 216–236 (PGVMAGMIAIFMSFAGQFAFF) form a helical membrane-spanning segment. The Periplasmic portion of the chain corresponds to 237–255 (TYIRPVYMNLAGFDVDGLT). A helical transmembrane segment spans residues 256–276 (LVLLSFGIASFVGTSFSSYVL). The Cytoplasmic portion of the chain corresponds to 277 to 281 (KRSVK). The chain crosses the membrane as a helical span at residues 282 to 302 (LALAGAPLLLALSALTLIVWG). Over 303–305 (SDK) the chain is Periplasmic. A helical transmembrane segment spans residues 306–326 (TVAAAIAIIWGLAFALVPVGW). The Cytoplasmic segment spans residues 327-343 (STWITRSLADQAEKAGS). The helical transmembrane segment at 344–364 (IQVAVIQLANTCGAAVGGYAL) threads the bilayer. At 365–366 (DN) the chain is on the periplasmic side. The chain crosses the membrane as a helical span at residues 367-387 (FGLLSPLALSGGLMLLTALVV). Topologically, residues 388–397 (AAKVRITPMS) are cytoplasmic.

Belongs to the major facilitator superfamily. DHA1 family. NepI (TC 2.A.1.2.26) subfamily.

It is found in the cell inner membrane. The enzyme catalyses inosine(in) + H(+)(out) = inosine(out) + H(+)(in). The catalysed reaction is guanosine(in) + H(+)(out) = guanosine(out) + H(+)(in). Involved in the efflux of purine ribonucleosides, such as inosine and guanosine. The sequence is that of Purine ribonucleoside efflux pump NepI from Salmonella paratyphi A (strain ATCC 9150 / SARB42).